A 412-amino-acid polypeptide reads, in one-letter code: Serine hydroxymethyltransferase (412 aa).

(6S)-5,6,7,8-tetrahydrofolate is bound by residues Leu117 and 121-123 (GHL). N6-(pyridoxal phosphate)lysine is present on Lys226. (6S)-5,6,7,8-tetrahydrofolate-binding positions include Glu242 and 350–352 (SPF).

This sequence belongs to the SHMT family. Homodimer. Pyridoxal 5'-phosphate serves as cofactor.

It localises to the cytoplasm. The catalysed reaction is (6R)-5,10-methylene-5,6,7,8-tetrahydrofolate + glycine + H2O = (6S)-5,6,7,8-tetrahydrofolate + L-serine. The protein operates within one-carbon metabolism; tetrahydrofolate interconversion. Its pathway is amino-acid biosynthesis; glycine biosynthesis; glycine from L-serine: step 1/1. Its function is as follows. Catalyzes the reversible interconversion of serine and glycine with tetrahydrofolate (THF) serving as the one-carbon carrier. Also exhibits THF-independent aldolase activity toward beta-hydroxyamino acids, producing glycine and aldehydes, via a retro-aldol mechanism. This chain is Serine hydroxymethyltransferase, found in Methanosarcina mazei (strain ATCC BAA-159 / DSM 3647 / Goe1 / Go1 / JCM 11833 / OCM 88) (Methanosarcina frisia).